The primary structure comprises 275 residues: T-cell ecto-ADP-ribosyltransferase 2 (275 aa).

The signal sequence occupies residues 1-20 (MPSNICKFFLTWWLIQQVTG). Intrachain disulfides connect Cys-41/Cys-243 and Cys-141/Cys-193. The region spanning 61 to 238 (AKLKVAWEEA…IFLDSPKRKK (178 aa)) is the TR mART core domain. Residues Tyr-98, Arg-146, and Gln-164 each coordinate NAD(+). Residue Arg-146 is part of the active site. Ser-167 is a catalytic residue. Ser-202 serves as a coordination point for NAD(+). Position 204 is an ADP-ribosylarginine; by autocatalysis (Arg-204). The active site involves Glu-209. Ser-246 carries GPI-anchor amidated serine lipidation. Residues 247-275 (SAGARESCVSLFLVVLPSLLVQLLCLAEP) constitute a propeptide, removed in mature form.

This sequence belongs to the Arg-specific ADP-ribosyltransferase family. Postthymic T-cells.

Its subcellular location is the cell membrane. It catalyses the reaction L-arginyl-[protein] + NAD(+) = N(omega)-(ADP-D-ribosyl)-L-arginyl-[protein] + nicotinamide + H(+). The catalysed reaction is NAD(+) + H2O = ADP-D-ribose + nicotinamide + H(+). Its function is as follows. Has both NAD(+) glycohydrolase and ADP-ribosyltransferase activity (to a lesser extent). The chain is T-cell ecto-ADP-ribosyltransferase 2 (Art2b) from Rattus norvegicus (Rat).